A 151-amino-acid chain; its full sequence is tRNA-specific adenosine deaminase (151 aa).

In terms of domain architecture, CMP/dCMP-type deaminase spans 4–122 (NRDSYWMKIA…PFLKKIFINL (119 aa)). His55 serves as a coordination point for Zn(2+). The Proton donor role is filled by Glu57. Residues Cys85 and Cys88 each coordinate Zn(2+).

It belongs to the cytidine and deoxycytidylate deaminase family. As to quaternary structure, homodimer. Requires Zn(2+) as cofactor.

It carries out the reaction adenosine(34) in tRNA + H2O + H(+) = inosine(34) in tRNA + NH4(+). Its function is as follows. Catalyzes the deamination of adenosine to inosine at the wobble position 34 of tRNA(Arg2). This is tRNA-specific adenosine deaminase from Buchnera aphidicola subsp. Schizaphis graminum (strain Sg).